The following is a 259-amino-acid chain: Ribonuclease HII (259 aa).

Residues 72–259 (SYIAGIDEVG…PIKDMIKNKL (188 aa)) form the RNase H type-2 domain. The a divalent metal cation site is built by Asp-78, Glu-79, and Asp-170.

It belongs to the RNase HII family. Requires Mn(2+) as cofactor. It depends on Mg(2+) as a cofactor.

It is found in the cytoplasm. It catalyses the reaction Endonucleolytic cleavage to 5'-phosphomonoester.. Endonuclease that specifically degrades the RNA of RNA-DNA hybrids. The protein is Ribonuclease HII of Bacillus cytotoxicus (strain DSM 22905 / CIP 110041 / 391-98 / NVH 391-98).